Consider the following 281-residue polypeptide: MYLIEILKSIFFGIVEGITEWLPISSTGHLILAEEFIQYQNQNEAFMSMFNVVIQLGAILAVMVIYFNKLNPFKPTKDKQEVRKTWRLWLKVLIATLPLLGVFKFDDWFDTHFHNMVSVALMLIIYGVAFIYLEKRNKARAIEPSVTELDKLPYTTAFYIGLFQVLALLPGTSRSGATIVGGLLNGTSRSVVTEFTFYLGIPVMFGASALKIFKFVKAGELLSFGQLFLLLVAMGVAFAVSMVAIRFLTSYVKKHDFTLFGKYRIVLGSVLLLYSFVRLFV.

8 consecutive transmembrane segments (helical) span residues 4 to 24, 45 to 65, 89 to 109, 113 to 133, 152 to 172, 190 to 210, 225 to 245, and 257 to 277; these read IEIL…WLPI, AFMS…VMVI, WLKV…DDWF, FHNM…FIYL, LPYT…LPGT, SVVT…ASAL, GQLF…MVAI, and FTLF…YSFV.

Belongs to the UppP family.

The protein resides in the cell membrane. It carries out the reaction di-trans,octa-cis-undecaprenyl diphosphate + H2O = di-trans,octa-cis-undecaprenyl phosphate + phosphate + H(+). Functionally, catalyzes the dephosphorylation of undecaprenyl diphosphate (UPP). Confers resistance to bacitracin. This chain is Undecaprenyl-diphosphatase, found in Streptococcus pneumoniae (strain Hungary19A-6).